Reading from the N-terminus, the 365-residue chain is Cytoplasmic tRNA 2-thiolation protein 1 (365 aa).

Belongs to the TtcA family. CTU1/NCS6/ATPBD3 subfamily.

It is found in the cytoplasm. It participates in tRNA modification; 5-methoxycarbonylmethyl-2-thiouridine-tRNA biosynthesis. Plays a central role in 2-thiolation of mcm(5)S(2)U at tRNA wobble positions of tRNA(Lys), tRNA(Glu) and tRNA(Gln). Directly binds tRNAs and probably acts by catalyzing adenylation of tRNAs, an intermediate required for 2-thiolation. It is unclear whether it acts as a sulfurtransferase that transfers sulfur from thiocarboxylated URM1 onto the uridine of tRNAs at wobble position. Prior mcm(5) tRNA modification by the elongator complex is required for 2-thiolation. May also be involved in protein urmylation. The polypeptide is Cytoplasmic tRNA 2-thiolation protein 1 (Yarrowia lipolytica (strain CLIB 122 / E 150) (Yeast)).